Consider the following 281-residue polypeptide: ATP phosphoribosyltransferase (281 aa).

The protein belongs to the ATP phosphoribosyltransferase family. Long subfamily. The cofactor is Mg(2+).

It localises to the cytoplasm. The enzyme catalyses 1-(5-phospho-beta-D-ribosyl)-ATP + diphosphate = 5-phospho-alpha-D-ribose 1-diphosphate + ATP. It functions in the pathway amino-acid biosynthesis; L-histidine biosynthesis; L-histidine from 5-phospho-alpha-D-ribose 1-diphosphate: step 1/9. Its activity is regulated as follows. Feedback inhibited by histidine. Catalyzes the condensation of ATP and 5-phosphoribose 1-diphosphate to form N'-(5'-phosphoribosyl)-ATP (PR-ATP). Has a crucial role in the pathway because the rate of histidine biosynthesis seems to be controlled primarily by regulation of HisG enzymatic activity. The chain is ATP phosphoribosyltransferase from Corynebacterium efficiens (strain DSM 44549 / YS-314 / AJ 12310 / JCM 11189 / NBRC 100395).